A 219-amino-acid chain; its full sequence is Poxin (219 aa).

His-17 acts as the Proton donor in catalysis. Tyr-138 serves as the catalytic Shared with catalytic histidine of dimeric partner. The Proton acceptor; shared with catalytic histidine of dimeric partner role is filled by Lys-142.

It belongs to the poxin family. Homodimer.

The catalysed reaction is 2',3'-cGAMP + H2O = Gp(2'-5')Ap(3') + H(+). Its function is as follows. Nuclease that is responsible for viral evasion of host cGAS-STING innate immunity. Cleaves 2',3'-cGAMP which is produced by host cGAS following recognition of cytosolic DNA and blocks the subsequent 2',3'-cGAMP-mediated activation of TMEM173/STING, which normally spreads to adjacent cells and activates the interferon and NF-kappa-B immune responses. This is Poxin (OPG188) from Bos taurus (Bovine).